Consider the following 545-residue polypeptide: Thermosome subunit (545 aa).

The protein belongs to the TCP-1 chaperonin family. In terms of assembly, forms an oligomeric complex of eight-membered rings.

Its function is as follows. Molecular chaperone; binds unfolded polypeptides in vitro, and has a weak ATPase activity. The polypeptide is Thermosome subunit (ths) (Desulfurococcus sp. (strain SY)).